Consider the following 504-residue polypeptide: GTPase Obg (504 aa).

One can recognise an Obg domain in the interval 2–159 (SQFVDRVVLH…KDVTLELKSM (158 aa)). The interval 68–88 (AERGNNGAGDDRHGARGKDLT) is disordered. The OBG-type G domain maps to 160 to 340 (ADVGLVGFPS…LRFALMDIVR (181 aa)). GTP contacts are provided by residues 166 to 173 (GFPSAGKS), 191 to 195 (FTTLA), 212 to 215 (DVPG), 292 to 295 (NKMD), and 321 to 323 (STV). 2 residues coordinate Mg(2+): serine 173 and threonine 193. An OCT domain is found at 364 to 444 (KRKGRFADFE…IGGITFEWDP (81 aa)). The disordered stretch occupies residues 449–481 (GVDQTPAYGRGKDRRLEQTDRVTAEQRKRASQA). A compositionally biased stretch (basic and acidic residues) spans 458 to 476 (RGKDRRLEQTDRVTAEQRK).

The protein belongs to the TRAFAC class OBG-HflX-like GTPase superfamily. OBG GTPase family. In terms of assembly, monomer. Mg(2+) is required as a cofactor.

The protein localises to the cytoplasm. Its function is as follows. An essential GTPase which binds GTP, GDP and possibly (p)ppGpp with moderate affinity, with high nucleotide exchange rates and a fairly low GTP hydrolysis rate. Plays a role in control of the cell cycle, stress response, ribosome biogenesis and in those bacteria that undergo differentiation, in morphogenesis control. In Corynebacterium urealyticum (strain ATCC 43042 / DSM 7109), this protein is GTPase Obg.